Reading from the N-terminus, the 180-residue chain is Inosine/xanthosine triphosphatase (180 aa).

8–13 (TTNPAK) lines the substrate pocket. Mg(2+) is bound by residues D38 and E68. 68–69 (EA) contributes to the substrate binding site.

It belongs to the YjjX NTPase family. Homodimer. The cofactor is Mg(2+). Requires Mn(2+) as cofactor.

It carries out the reaction XTP + H2O = XDP + phosphate + H(+). The catalysed reaction is ITP + H2O = IDP + phosphate + H(+). In terms of biological role, phosphatase that hydrolyzes non-canonical purine nucleotides such as XTP and ITP to their respective diphosphate derivatives. Probably excludes non-canonical purines from DNA/RNA precursor pool, thus preventing their incorporation into DNA/RNA and avoiding chromosomal lesions. The sequence is that of Inosine/xanthosine triphosphatase from Yersinia pestis bv. Antiqua (strain Antiqua).